The chain runs to 180 residues: Transcriptional repressor NrdR (180 aa).

A zinc finger spans residues 3-34; sequence CPRCSKQEIRVLESRSAEGGQSVRRRRECMSC. An ATP-cone domain is found at 49–139; sequence IMVIKRDGSR…VYRQFQGIKD (91 aa). The interval 155–180 is disordered; the sequence is LERLLQDSSASDSESSGSPDLVGEYS. Residues 160 to 174 show a composition bias toward low complexity; the sequence is QDSSASDSESSGSPD.

The protein belongs to the NrdR family. It depends on Zn(2+) as a cofactor.

Its function is as follows. Negatively regulates transcription of bacterial ribonucleotide reductase nrd genes and operons by binding to NrdR-boxes. The sequence is that of Transcriptional repressor NrdR from Synechococcus sp. (strain JA-2-3B'a(2-13)) (Cyanobacteria bacterium Yellowstone B-Prime).